We begin with the raw amino-acid sequence, 313 residues long: Methionyl-tRNA formyltransferase (313 aa).

Residue 113–116 (SLLP) coordinates (6S)-5,6,7,8-tetrahydrofolate.

Belongs to the Fmt family.

It catalyses the reaction L-methionyl-tRNA(fMet) + (6R)-10-formyltetrahydrofolate = N-formyl-L-methionyl-tRNA(fMet) + (6S)-5,6,7,8-tetrahydrofolate + H(+). Its function is as follows. Attaches a formyl group to the free amino group of methionyl-tRNA(fMet). The formyl group appears to play a dual role in the initiator identity of N-formylmethionyl-tRNA by promoting its recognition by IF2 and preventing the misappropriation of this tRNA by the elongation apparatus. The chain is Methionyl-tRNA formyltransferase from Francisella tularensis subsp. holarctica (strain FTNF002-00 / FTA).